Consider the following 311-residue polypeptide: MLLTQSYFCIMSMLGTLARLGLTALNTYPGAPFSGLLWVQFVGCVIMGFCQTESVFFPRPKHNATFLLAITTGFCGSLTTFSSWMLQMFTGMANLDPFERRGRGYSFLSVVSDFMVTMCIAMSSLIWGKQIGKTTGQWRIGKVAFAWPIPAHTHIVVRVLLLLLSICFFVGAAFYTAYTTNVTHRGIGFSLIFSPFAALTRLYLARFLNSPQYFIPYGTLCANVFATLLLSIMYMIPQITHCTPVSRSVMYGIQNGFCAVLSTLSTFSNELHTMPIKRAYIYCIISVAISFSICVIVDGATAWGHGYTEKY.

At 1-6 the chain is on the cytoplasmic side; the sequence is MLLTQS. Residues 7-25 form a helical membrane-spanning segment; that stretch reads YFCIMSMLGTLARLGLTAL. Over 26-29 the chain is Extracellular; that stretch reads NTYP. A helical membrane pass occupies residues 30 to 50; that stretch reads GAPFSGLLWVQFVGCVIMGFC. The Cytoplasmic portion of the chain corresponds to 51 to 65; that stretch reads QTESVFFPRPKHNAT. The helical transmembrane segment at 66–86 threads the bilayer; the sequence is FLLAITTGFCGSLTTFSSWML. Topologically, residues 87 to 106 are extracellular; that stretch reads QMFTGMANLDPFERRGRGYS. Residues 107–127 traverse the membrane as a helical segment; it reads FLSVVSDFMVTMCIAMSSLIW. Residues 128-154 are Cytoplasmic-facing; sequence GKQIGKTTGQWRIGKVAFAWPIPAHTH. A helical membrane pass occupies residues 155–175; the sequence is IVVRVLLLLLSICFFVGAAFY. The Extracellular portion of the chain corresponds to 176–186; sequence TAYTTNVTHRG. The N-linked (GlcNAc...) asparagine glycan is linked to asparagine 181. The chain crosses the membrane as a helical span at residues 187–207; sequence IGFSLIFSPFAALTRLYLARF. The Cytoplasmic portion of the chain corresponds to 208–212; it reads LNSPQ. A helical transmembrane segment spans residues 213-233; that stretch reads YFIPYGTLCANVFATLLLSIM. Over 234-250 the chain is Extracellular; the sequence is YMIPQITHCTPVSRSVM. A helical transmembrane segment spans residues 251–268; that stretch reads YGIQNGFCAVLSTLSTFS. At 269–278 the chain is on the cytoplasmic side; it reads NELHTMPIKR. The chain crosses the membrane as a helical span at residues 279-299; it reads AYIYCIISVAISFSICVIVDG. At 300 to 311 the chain is on the extracellular side; that stretch reads ATAWGHGYTEKY.

Belongs to the fluoride channel Fluc/FEX (TC 1.A.43) family.

It localises to the cell membrane. The catalysed reaction is fluoride(in) = fluoride(out). In terms of biological role, fluoride channel required for the rapid expulsion of cytoplasmic fluoride. In Schizosaccharomyces pombe (strain 972 / ATCC 24843) (Fission yeast), this protein is Fluoride export protein 1 (fex1).